Here is a 670-residue protein sequence, read N- to C-terminus: Probable urocanate hydratase (670 aa).

NAD(+) contacts are provided by residues 126–127 (GG), Q204, 250–252 (GMS), E270, 316–317 (NV), 338–342 (QTSLH), 349–350 (FY), Y398, and G590.

Belongs to the urocanase family. The cofactor is NAD(+).

The enzyme catalyses 4-imidazolone-5-propanoate = trans-urocanate + H2O. Its pathway is amino-acid degradation; L-histidine degradation into L-glutamate; N-formimidoyl-L-glutamate from L-histidine: step 2/3. The sequence is that of Probable urocanate hydratase from Caenorhabditis elegans.